Reading from the N-terminus, the 375-residue chain is o-succinylbenzoate synthase (375 aa).

The Proton donor role is filled by lysine 166. Mg(2+) contacts are provided by aspartate 191, glutamate 216, and aspartate 241. Lysine 265 serves as the catalytic Proton acceptor.

Belongs to the mandelate racemase/muconate lactonizing enzyme family. MenC type 2 subfamily. Homotetramer. The cofactor is a divalent metal cation.

The enzyme catalyses (1R,6R)-6-hydroxy-2-succinyl-cyclohexa-2,4-diene-1-carboxylate = 2-succinylbenzoate + H2O. It catalyses the reaction N-acetyl-D-methionine = N-acetyl-L-methionine. Its pathway is quinol/quinone metabolism; 1,4-dihydroxy-2-naphthoate biosynthesis; 1,4-dihydroxy-2-naphthoate from chorismate: step 4/7. It participates in quinol/quinone metabolism; menaquinone biosynthesis. Its function is as follows. Converts 2-succinyl-6-hydroxy-2,4-cyclohexadiene-1-carboxylate (SHCHC) to 2-succinylbenzoate (OSB). Also acts as a N-succinylamino acid racemase (NSAR) that catalyzes the racemization of N-succinyl-D/L-phenylalanine. Can catalyze the racemization of a broad range of N-acylamino acids, including N-acetyl-D-methionine, N-formyl-D/L-methionine, N-formyl-D/L-norleucine, N-formyl-D/L-aminobutyric acid, N-formyl-D/L-norvaline, N-formyl-D/L-homophenylalanine, N-carbamoyl-D-methionine and N-carbamoyl-D-norleucine. May be a bifunctional enzyme involved in menaquinone biosynthesis and in an irreversible pathway for the conversion of D- to L-amino acids, thereby facilitating the survival and/or growth of the organism. This is o-succinylbenzoate synthase from Geobacillus stearothermophilus (Bacillus stearothermophilus).